Reading from the N-terminus, the 149-residue chain is Deoxyuridine 5'-triphosphate nucleotidohydrolase (149 aa).

Residues 68 to 70 (RSG), N81, 85 to 87 (LID), and M95 contribute to the substrate site.

Belongs to the dUTPase family. Mg(2+) is required as a cofactor.

The enzyme catalyses dUTP + H2O = dUMP + diphosphate + H(+). The protein operates within pyrimidine metabolism; dUMP biosynthesis; dUMP from dCTP (dUTP route): step 2/2. Functionally, this enzyme is involved in nucleotide metabolism: it produces dUMP, the immediate precursor of thymidine nucleotides and it decreases the intracellular concentration of dUTP so that uracil cannot be incorporated into DNA. This chain is Deoxyuridine 5'-triphosphate nucleotidohydrolase, found in Bordetella avium (strain 197N).